Consider the following 201-residue polypeptide: Prostamide/prostaglandin F synthase (201 aa).

Phosphotyrosine is present on Y108.

The protein belongs to the peroxiredoxin-like PRXL2 family. Prostamide/prostaglandin F synthase subfamily.

The protein localises to the cytoplasm. Its subcellular location is the cytosol. The enzyme catalyses prostaglandin H2 + [thioredoxin]-dithiol = prostaglandin F2alpha + [thioredoxin]-disulfide. It carries out the reaction prostamide F2alpha + [thioredoxin]-disulfide = prostamide H2 + [thioredoxin]-dithiol. Functionally, catalyzes the reduction of prostaglandin-ethanolamide H(2) (prostamide H(2)) to prostamide F(2alpha) with NADPH as proton donor. Also able to reduce prostaglandin H(2) to prostaglandin F(2alpha). This Bos taurus (Bovine) protein is Prostamide/prostaglandin F synthase (PRXL2B).